Here is a 643-residue protein sequence, read N- to C-terminus: Mediator of RNA polymerase II transcription subunit 17 (643 aa).

The disordered stretch occupies residues 53–82; that stretch reads SDSEEDGAERARAGREQWKQEPEEDEGQLK. Positions 60-73 are enriched in basic and acidic residues; sequence AERARAGREQWKQE.

The protein belongs to the Mediator complex subunit 17 family. In terms of assembly, component of the Mediator complex.

The protein localises to the nucleus. Component of the Mediator complex, a coactivator involved in the regulated transcription of nearly all RNA polymerase II-dependent genes. Mediator functions as a bridge to convey information from gene-specific regulatory proteins to the basal RNA polymerase II transcription machinery. Mediator is recruited to promoters by direct interactions with regulatory proteins and serves as a scaffold for the assembly of a functional preinitiation complex with RNA polymerase II and the general transcription factors. The chain is Mediator of RNA polymerase II transcription subunit 17 (med17) from Danio rerio (Zebrafish).